We begin with the raw amino-acid sequence, 212 residues long: Ras-related protein Rab-15 (212 aa).

10 residues coordinate GTP: S17, G18, V19, G20, K21, T22, C23, S35, S39, and T40. T22 is a binding site for Mg(2+). 2 short sequence motifs (switch) span residues 31-45 and 63-80; these read NEFH…GVDF and DTAG…YYRR. 2 residues coordinate Mg(2+): T40 and D63. GTP-binding residues include G66, N121, K122, D124, S151, and A152. A disordered region spans residues 192–212; sequence ELEEDEGKPEGPANSSKTCWC. 2 S-geranylgeranyl cysteine lipidation sites follow: C210 and C212. C212 carries the post-translational modification Cysteine methyl ester.

The protein belongs to the small GTPase superfamily. Rab family. The GTP bound form of RAB15 interacts with REP15. Interacts (GTP-bound form) with MICAL1, MICAL3, MICALCL, EHBP1 and EHBP1L1. Mg(2+) is required as a cofactor.

It localises to the cell membrane. The catalysed reaction is GTP + H2O = GDP + phosphate + H(+). Regulated by guanine nucleotide exchange factors (GEFs) which promote the exchange of bound GDP for free GTP. Regulated by GTPase activating proteins (GAPs) which increase the GTP hydrolysis activity. Inhibited by GDP dissociation inhibitors (GDIs). In terms of biological role, the small GTPases Rab are key regulators of intracellular membrane trafficking, from the formation of transport vesicles to their fusion with membranes. Rabs cycle between an inactive GDP-bound form and an active GTP-bound form that is able to recruit to membranes different sets of downstream effectors directly responsible for vesicle formation, movement, tethering and fusion. RAB15 may act in concert with RAB3A in regulating aspects of synaptic vesicle membrane flow within the nerve terminal. The protein is Ras-related protein Rab-15 of Mus musculus (Mouse).